A 352-amino-acid polypeptide reads, in one-letter code: Chorismate synthase (352 aa).

An NADP(+)-binding site is contributed by R48. Residues 125 to 127 (RSS), 237 to 238 (NA), G278, 293 to 297 (KPTSS), and R319 contribute to the FMN site.

This sequence belongs to the chorismate synthase family. As to quaternary structure, homotetramer. It depends on FMNH2 as a cofactor.

It carries out the reaction 5-O-(1-carboxyvinyl)-3-phosphoshikimate = chorismate + phosphate. Its pathway is metabolic intermediate biosynthesis; chorismate biosynthesis; chorismate from D-erythrose 4-phosphate and phosphoenolpyruvate: step 7/7. Functionally, catalyzes the anti-1,4-elimination of the C-3 phosphate and the C-6 proR hydrogen from 5-enolpyruvylshikimate-3-phosphate (EPSP) to yield chorismate, which is the branch point compound that serves as the starting substrate for the three terminal pathways of aromatic amino acid biosynthesis. This reaction introduces a second double bond into the aromatic ring system. The chain is Chorismate synthase from Francisella tularensis subsp. holarctica (strain FTNF002-00 / FTA).